The following is a 206-amino-acid chain: Guanylate kinase (206 aa).

The Guanylate kinase-like domain occupies 6–184; it reads GNLFILSAPS…ALTDIETIVM (179 aa). 13 to 20 lines the ATP pocket; the sequence is APSGAGKS.

It belongs to the guanylate kinase family.

It is found in the cytoplasm. The catalysed reaction is GMP + ATP = GDP + ADP. Functionally, essential for recycling GMP and indirectly, cGMP. The polypeptide is Guanylate kinase (Pseudoalteromonas translucida (strain TAC 125)).